The chain runs to 295 residues: Putative fused nickel transport protein NikMN (295 aa).

A run of 8 helical transmembrane segments spans residues 8-28 (LDLS…GYSI), 39-59 (LFGI…PIPG), 70-90 (LAGI…VLTI), 98-118 (GGIT…VFVG), 135-155 (FIAG…EIGI), 175-195 (ALLG…IAAA), 211-231 (LAVI…AELV), and 268-288 (AGTL…GFAL).

It belongs to the CbiM family. NikM subfamily.

Its subcellular location is the cell membrane. In terms of biological role, may be involved in nickel transport. The sequence is that of Putative fused nickel transport protein NikMN from Archaeoglobus fulgidus (strain ATCC 49558 / DSM 4304 / JCM 9628 / NBRC 100126 / VC-16).